We begin with the raw amino-acid sequence, 143 residues long: Putative pre-16S rRNA nuclease (143 aa).

It belongs to the YqgF nuclease family.

Its subcellular location is the cytoplasm. Its function is as follows. Could be a nuclease involved in processing of the 5'-end of pre-16S rRNA. The protein is Putative pre-16S rRNA nuclease (ybeB) of Lactococcus lactis subsp. lactis (strain IL1403) (Streptococcus lactis).